Reading from the N-terminus, the 694-residue chain is Probable methyltransferase PMT11 (694 aa).

Residues 1-14 lie on the Cytoplasmic side of the membrane; it reads MKPLTNGDLFKSPT. Residues 15–32 traverse the membrane as a helical; Signal-anchor for type II membrane protein segment; that stretch reads LIKISALVFVTVAFFYLG. The Lumenal segment spans residues 33–694; sequence KHWSDDGYQQ…LTCEKRLLRA (662 aa). N-linked (GlcNAc...) asparagine glycans are attached at residues Asn-69 and Asn-77. The segment at 83 to 128 is disordered; the sequence is IPATIRQQPPSVVADTEKVKVEANPPPPPPPSPSPPPPPGPVKSFG. Pro residues predominate over residues 106 to 123; the sequence is NPPPPPPPSPSPPPPPGP. N-linked (GlcNAc...) asparagine glycosylation is found at Asn-155, Asn-378, and Asn-423.

Belongs to the methyltransferase superfamily.

It localises to the golgi apparatus membrane. This is Probable methyltransferase PMT11 from Arabidopsis thaliana (Mouse-ear cress).